A 505-amino-acid chain; its full sequence is Light-independent protochlorophyllide reductase subunit B (505 aa).

A [4Fe-4S] cluster-binding site is contributed by aspartate 36. The active-site Proton donor is the aspartate 291. A substrate-binding site is contributed by 426-427 (GM).

It belongs to the ChlB/BchB/BchZ family. As to quaternary structure, protochlorophyllide reductase is composed of three subunits; ChlL, ChlN and ChlB. Forms a heterotetramer of two ChlB and two ChlN subunits. The cofactor is [4Fe-4S] cluster.

The enzyme catalyses chlorophyllide a + oxidized 2[4Fe-4S]-[ferredoxin] + 2 ADP + 2 phosphate = protochlorophyllide a + reduced 2[4Fe-4S]-[ferredoxin] + 2 ATP + 2 H2O. It participates in porphyrin-containing compound metabolism; chlorophyll biosynthesis (light-independent). Functionally, component of the dark-operative protochlorophyllide reductase (DPOR) that uses Mg-ATP and reduced ferredoxin to reduce ring D of protochlorophyllide (Pchlide) to form chlorophyllide a (Chlide). This reaction is light-independent. The NB-protein (ChlN-ChlB) is the catalytic component of the complex. The chain is Light-independent protochlorophyllide reductase subunit B from Gloeobacter violaceus (strain ATCC 29082 / PCC 7421).